Reading from the N-terminus, the 220-residue chain is Probable acrEF/envCD operon repressor (220 aa).

The HTH tetR-type domain occupies 10–70; it reads LKTRQELIET…EMWLQQPSLR (61 aa). The H-T-H motif DNA-binding region spans 33 to 52; it reads TLNDIADAANVTRGAIYWHF.

Functionally, potential regulator protein for the acrEF/envCD genes. The chain is Probable acrEF/envCD operon repressor (envR) from Escherichia coli O157:H7.